A 525-amino-acid polypeptide reads, in one-letter code: MTQIAHPDSILIIDFGSQVTQLIARRIREAGVYCEIHPFQNAAEAFEKLQPKGVIFSGGPASVTAEGSPRAPQAVFDSKVPILGICYGQQTLCTQLGGVVEGGHAAEFGRADIDIKKASPLFEGFWEQGKSYPVWMSHGDRVTKLPEGFEVIATSENAPFAIAADEKRHYYTTMFHPEVVHTPDGGKLLSNFVHKIVGLKSDWTMAAYRAEMIRKIREQVGTGRVLCALSGGVDSSVAAILIHEAIGDQLTCVYVDHGLMRLGESEQVVGMFRDHYNIPLVHVDAADLFLGELSGVSDPEVKRKTIGRLFIEVFEAEAAKIAADGKGAPKFLAQGTLYPDVIESVSFSGGPSVTIKSHHNVGGLPERMNMQLVEPLRELFKDEVRALGRELGLPESFIGRHPFPGPGLAIRCPGAITREKLDILRKADAIYLDEIRKAGLYDTIWQAFAVLLPVQTVGVMGDYRTYDFVCALRAVTSVDGMTADFYPYDMNFLGRAATRIINEVRGINRVVYDVTSKPPGTIEWE.

Residues 9-202 (SILIIDFGSQ…VHKIVGLKSD (194 aa)) form the Glutamine amidotransferase type-1 domain. The active-site Nucleophile is Cys86. Residues His176 and Glu178 contribute to the active site. Residues 203-400 (WTMAAYRAEM…LGLPESFIGR (198 aa)) enclose the GMPS ATP-PPase domain. Residue 230 to 236 (SGGVDSS) coordinates ATP.

In terms of assembly, homodimer.

The catalysed reaction is XMP + L-glutamine + ATP + H2O = GMP + L-glutamate + AMP + diphosphate + 2 H(+). It functions in the pathway purine metabolism; GMP biosynthesis; GMP from XMP (L-Gln route): step 1/1. In terms of biological role, catalyzes the synthesis of GMP from XMP. The polypeptide is GMP synthase [glutamine-hydrolyzing] (Agrobacterium fabrum (strain C58 / ATCC 33970) (Agrobacterium tumefaciens (strain C58))).